A 350-amino-acid polypeptide reads, in one-letter code: Phosphotriesterase-related protein (350 aa).

6 residues coordinate a divalent metal cation: H22, H24, E169, H201, H230, and D298.

The protein belongs to the metallo-dependent hydrolases superfamily. Phosphotriesterase family. Requires a divalent metal cation as cofactor.

This is Phosphotriesterase-related protein from Drosophila mojavensis (Fruit fly).